A 300-amino-acid chain; its full sequence is 33 kDa chaperonin (300 aa).

Cystine bridges form between Cys247–Cys249 and Cys280–Cys283.

The protein belongs to the HSP33 family. In terms of processing, under oxidizing conditions two disulfide bonds are formed involving the reactive cysteines. Under reducing conditions zinc is bound to the reactive cysteines and the protein is inactive.

The protein resides in the cytoplasm. Redox regulated molecular chaperone. Protects both thermally unfolding and oxidatively damaged proteins from irreversible aggregation. Plays an important role in the bacterial defense system toward oxidative stress. The sequence is that of 33 kDa chaperonin from Prochlorococcus marinus (strain MIT 9515).